We begin with the raw amino-acid sequence, 85 residues long: Large ribosomal subunit protein bL27 (85 aa).

The interval 1-20 is disordered; the sequence is MAHKKAGGSTRNGRDSEAKR.

The protein belongs to the bacterial ribosomal protein bL27 family.

This Escherichia coli O139:H28 (strain E24377A / ETEC) protein is Large ribosomal subunit protein bL27.